We begin with the raw amino-acid sequence, 443 residues long: 3-phosphoshikimate 1-carboxyvinyltransferase (443 aa).

Positions 1 to 25 (MSHSAEPLPMTARRSGPLTGEAQVP) are disordered. Residues Lys-28, Ser-29, and Arg-33 each contribute to the 3-phosphoshikimate site. Lys-28 serves as a coordination point for phosphoenolpyruvate. Positions 101 and 129 each coordinate phosphoenolpyruvate. 3-phosphoshikimate is bound by residues Ser-174, Gln-176, Asp-326, and Lys-353. Position 176 (Gln-176) interacts with phosphoenolpyruvate. Asp-326 acts as the Proton acceptor in catalysis. Residues Arg-357 and Arg-400 each contribute to the phosphoenolpyruvate site.

Belongs to the EPSP synthase family. Monomer.

It is found in the cytoplasm. It carries out the reaction 3-phosphoshikimate + phosphoenolpyruvate = 5-O-(1-carboxyvinyl)-3-phosphoshikimate + phosphate. It functions in the pathway metabolic intermediate biosynthesis; chorismate biosynthesis; chorismate from D-erythrose 4-phosphate and phosphoenolpyruvate: step 6/7. Functionally, catalyzes the transfer of the enolpyruvyl moiety of phosphoenolpyruvate (PEP) to the 5-hydroxyl of shikimate-3-phosphate (S3P) to produce enolpyruvyl shikimate-3-phosphate and inorganic phosphate. This Paracoccus denitrificans (strain Pd 1222) protein is 3-phosphoshikimate 1-carboxyvinyltransferase.